Consider the following 335-residue polypeptide: Cytochrome c biogenesis protein CcsA (335 aa).

8 consecutive transmembrane segments (helical) span residues 15–35 (FLLLFLTMLIYWAGAAFPNVT), 36–56 (WLPTLGTTGVAIANLCMATLL), 68–88 (LSNLYESLFFLAWGVTAIHLV), 97–117 (LVGVVTTPVAMGITAFAALSL), 142–162 (VMMLSYATLMVGSVLAIAFLV), 243–263 (IIGLGFPLLTIGIIAGAVWAN), 278–298 (WALITWLVFAAYLHARITKGW), and 304–324 (AILAASGFVVVWVCYLGVNLL).

The protein belongs to the CcmF/CycK/Ccl1/NrfE/CcsA family. As to quaternary structure, may interact with ccs1.

Its subcellular location is the cellular thylakoid membrane. Its function is as follows. Required during biogenesis of c-type cytochromes (cytochrome c6 and cytochrome f) at the step of heme attachment. This is Cytochrome c biogenesis protein CcsA from Crocosphaera subtropica (strain ATCC 51142 / BH68) (Cyanothece sp. (strain ATCC 51142)).